The sequence spans 389 residues: S-adenosylmethionine synthase (389 aa).

His-17 lines the ATP pocket. Position 19 (Asp-19) interacts with Mg(2+). K(+) is bound at residue Glu-45. L-methionine contacts are provided by Glu-58 and Gln-101. The tract at residues 101–111 is flexible loop; that stretch reads QSPDIAQGVTE. ATP is bound by residues 168–170, 234–235, Asp-243, 249–250, Ala-266, and Lys-270; these read DSK, RF, and RK. Asp-243 serves as a coordination point for L-methionine. Lys-274 is an L-methionine binding site.

Belongs to the AdoMet synthase family. In terms of assembly, homotetramer; dimer of dimers. The cofactor is Mg(2+). K(+) serves as cofactor.

Its subcellular location is the cytoplasm. It catalyses the reaction L-methionine + ATP + H2O = S-adenosyl-L-methionine + phosphate + diphosphate. It participates in amino-acid biosynthesis; S-adenosyl-L-methionine biosynthesis; S-adenosyl-L-methionine from L-methionine: step 1/1. Its function is as follows. Catalyzes the formation of S-adenosylmethionine (AdoMet) from methionine and ATP. The overall synthetic reaction is composed of two sequential steps, AdoMet formation and the subsequent tripolyphosphate hydrolysis which occurs prior to release of AdoMet from the enzyme. In Geobacter sp. (strain M21), this protein is S-adenosylmethionine synthase.